The following is a 162-amino-acid chain: Protein A49 (162 aa).

Belongs to the poxviridae A49 protein family.

This chain is Protein A49, found in Homo sapiens (Human).